We begin with the raw amino-acid sequence, 201 residues long: Pyridoxal 5'-phosphate synthase subunit PdxT (201 aa).

49 to 51 provides a ligand contact to L-glutamine; it reads GES. The active-site Nucleophile is C81. Residues R110 and 139 to 140 each bind L-glutamine; that span reads IR. Residues H180 and E182 each act as charge relay system in the active site.

Belongs to the glutaminase PdxT/SNO family. As to quaternary structure, in the presence of PdxS, forms a dodecamer of heterodimers. Only shows activity in the heterodimer.

It catalyses the reaction aldehydo-D-ribose 5-phosphate + D-glyceraldehyde 3-phosphate + L-glutamine = pyridoxal 5'-phosphate + L-glutamate + phosphate + 3 H2O + H(+). The enzyme catalyses L-glutamine + H2O = L-glutamate + NH4(+). The protein operates within cofactor biosynthesis; pyridoxal 5'-phosphate biosynthesis. Catalyzes the hydrolysis of glutamine to glutamate and ammonia as part of the biosynthesis of pyridoxal 5'-phosphate. The resulting ammonia molecule is channeled to the active site of PdxS. This is Pyridoxal 5'-phosphate synthase subunit PdxT from Salinispora tropica (strain ATCC BAA-916 / DSM 44818 / JCM 13857 / NBRC 105044 / CNB-440).